The sequence spans 92 residues: Islet amyloid polypeptide (92 aa).

The first 22 residues, M1–A22, serve as a signal peptide directing secretion. A propeptide spanning residues T23–G34 is cleaved from the precursor. A disulfide bond links C38 and C43. Y73 is modified (tyrosine amide). Positions N77–L92 are excised as a propeptide.

This sequence belongs to the calcitonin family. As to quaternary structure, can form homodimers. Interacts with IDE and INS. Interaction with INS inhibits homodimerization and fibril formation.

It localises to the secreted. Its function is as follows. Amylin/IAPP is a glucoregulatory peptide hormone that plays an important role in the regulation of energy homeostasis. Selectively inhibits insulin-stimulated glucose utilization and glycogen deposition in muscle, while not affecting adipocyte glucose metabolism. IAPP function is mediated by the CALCR-RAMPs (AMYRs) receptor complexes. Amylin can also bind CALCR receptor in the absence of RAMPs, although it is more selective for AMYRs. This is Islet amyloid polypeptide (IAPP) from Cavia porcellus (Guinea pig).